Consider the following 143-residue polypeptide: Small ribosomal subunit protein bS6 (143 aa).

Residues glutamine 100–alanine 143 form a disordered region. The segment covering lysine 105–aspartate 121 has biased composition (basic and acidic residues). Over residues aspartate 126–alanine 143 the composition is skewed to low complexity.

This sequence belongs to the bacterial ribosomal protein bS6 family.

Functionally, binds together with bS18 to 16S ribosomal RNA. In Xylella fastidiosa (strain M12), this protein is Small ribosomal subunit protein bS6.